The chain runs to 485 residues: Probable aspartic-type endopeptidase opsB (485 aa).

A signal peptide spans 1–20 (MRHIFSLLSIVCLMVKHGAC). One can recognise a Peptidase A1 domain in the interval 69-397 (YFCNVTLGTP…DIANNEISIA (329 aa)). N-linked (GlcNAc...) asparagine glycosylation occurs at N72. D87 is an active-site residue. Residues N99, N107, N111, and N132 are each glycosylated (N-linked (GlcNAc...) asparagine). D285 is a catalytic residue. N-linked (GlcNAc...) asparagine glycans are attached at residues N328, N337, and N402. The GPI-anchor amidated serine moiety is linked to residue S461. Positions 462-485 (AGVARADKQYLAIALIAVWFVLGL) are cleaved as a propeptide — removed in mature form.

Belongs to the peptidase A1 family.

Its subcellular location is the cell membrane. Its function is as follows. Probable GPI-anchored aspartic-type endopeptidase which contributes to virulence. The sequence is that of Probable aspartic-type endopeptidase opsB (opsB) from Aspergillus fumigatus (strain ATCC MYA-4609 / CBS 101355 / FGSC A1100 / Af293) (Neosartorya fumigata).